A 199-amino-acid chain; its full sequence is NAD(P)H dehydrogenase (quinone) (199 aa).

Positions 4–190 (ILVLYYSMYG…AIARFQGEHV (187 aa)) constitute a Flavodoxin-like domain. FMN contacts are provided by residues 10–15 (SMYGHI) and 79–81 (TRF). Tyrosine 12 contacts NAD(+). Residue tryptophan 99 coordinates substrate. FMN is bound by residues 114 to 119 (STGTGG) and histidine 134.

This sequence belongs to the WrbA family. Requires FMN as cofactor.

The enzyme catalyses a quinone + NADH + H(+) = a quinol + NAD(+). It carries out the reaction a quinone + NADPH + H(+) = a quinol + NADP(+). This chain is NAD(P)H dehydrogenase (quinone), found in Yersinia enterocolitica serotype O:8 / biotype 1B (strain NCTC 13174 / 8081).